Reading from the N-terminus, the 363-residue chain is 24-methylenesterol C-methyltransferase 2 (363 aa).

A helical membrane pass occupies residues 6–26 (MAWTAAGVGMALVYWFVWVMG).

It belongs to the class I-like SAM-binding methyltransferase superfamily. Erg6/SMT family.

The protein resides in the membrane. The enzyme catalyses 24-methylidenelophenol + S-adenosyl-L-methionine = (Z)-24-ethylidenelophenol + S-adenosyl-L-homocysteine + H(+). It functions in the pathway steroid biosynthesis; sterol biosynthesis. In terms of biological role, catalyzes the methyl transfer from S-adenosyl-methionine to the methylene group of 24-methylene lophenol to form 24-ethylidene lophenol. The chain is 24-methylenesterol C-methyltransferase 2 (Smt2-1) from Oryza sativa subsp. japonica (Rice).